Here is an 86-residue protein sequence, read N- to C-terminus: Acyl carrier protein (86 aa).

One can recognise a Carrier domain in the interval 10–85; the sequence is DKIEQKVIEM…DVIKYIKERQ (76 aa). O-(pantetheine 4'-phosphoryl)serine is present on S45.

Belongs to the acyl carrier protein (ACP) family. In terms of processing, 4'-phosphopantetheine is transferred from CoA to a specific serine of apo-ACP by AcpS. This modification is essential for activity because fatty acids are bound in thioester linkage to the sulfhydryl of the prosthetic group.

The protein resides in the cytoplasm. The protein operates within lipid metabolism; fatty acid biosynthesis. In terms of biological role, carrier of the growing fatty acid chain in fatty acid biosynthesis. In Rickettsia africae (strain ESF-5), this protein is Acyl carrier protein.